We begin with the raw amino-acid sequence, 160 residues long: Transcription elongation factor GreA (160 aa).

Residues 12–76 (EGVKKLEEEL…QLENMLKNAS (65 aa)) adopt a coiled-coil conformation.

Belongs to the GreA/GreB family.

Its function is as follows. Necessary for efficient RNA polymerase transcription elongation past template-encoded arresting sites. The arresting sites in DNA have the property of trapping a certain fraction of elongating RNA polymerases that pass through, resulting in locked ternary complexes. Cleavage of the nascent transcript by cleavage factors such as GreA or GreB allows the resumption of elongation from the new 3'terminus. GreA releases sequences of 2 to 3 nucleotides. This Clostridium botulinum (strain Hall / ATCC 3502 / NCTC 13319 / Type A) protein is Transcription elongation factor GreA.